The primary structure comprises 351 residues: Farnesyl pyrophosphate synthase (351 aa).

Lys51, Arg54, and Gln92 together coordinate isopentenyl diphosphate. Mg(2+) is bound by residues Asp99 and Asp103. A dimethylallyl diphosphate-binding site is contributed by Arg108. Arg109 lines the isopentenyl diphosphate pocket. Lys196, Thr197, Gln236, Lys253, and Lys262 together coordinate dimethylallyl diphosphate.

The protein belongs to the FPP/GGPP synthase family. Mg(2+) serves as cofactor.

The enzyme catalyses isopentenyl diphosphate + dimethylallyl diphosphate = (2E)-geranyl diphosphate + diphosphate. It carries out the reaction isopentenyl diphosphate + (2E)-geranyl diphosphate = (2E,6E)-farnesyl diphosphate + diphosphate. It participates in isoprenoid biosynthesis; farnesyl diphosphate biosynthesis; farnesyl diphosphate from geranyl diphosphate and isopentenyl diphosphate: step 1/1. It functions in the pathway isoprenoid biosynthesis; geranyl diphosphate biosynthesis; geranyl diphosphate from dimethylallyl diphosphate and isopentenyl diphosphate: step 1/1. In terms of biological role, farnesyl pyrophosphate synthase; part of the second module of ergosterol biosynthesis pathway that includes the middle steps of the pathway. ERG20 catalyzes the sequential condensation of isopentenyl pyrophosphate with dimethylallyl pyrophosphate, and then with the resultant geranylpyrophosphate to the ultimate product farnesyl pyrophosphate. The second module is carried out in the vacuole and involves the formation of farnesyl diphosphate, which is also an important intermediate in the biosynthesis of ubiquinone, dolichol, heme and prenylated proteins. Activity by the mevalonate kinase ERG12 first converts mevalonate into 5-phosphomevalonate. 5-phosphomevalonate is then further converted to 5-diphosphomevalonate by the phosphomevalonate kinase ERG8. The diphosphomevalonate decarboxylase MVD then produces isopentenyl diphosphate. The isopentenyl-diphosphate delta-isomerase IDI1 then catalyzes the 1,3-allylic rearrangement of the homoallylic substrate isopentenyl (IPP) to its highly electrophilic allylic isomer, dimethylallyl diphosphate (DMAPP). Finally the farnesyl diphosphate synthase ERG20 catalyzes the sequential condensation of isopentenyl pyrophosphate with dimethylallyl pyrophosphate, and then with the resultant geranylpyrophosphate to the ultimate product farnesyl pyrophosphate. The sequence is that of Farnesyl pyrophosphate synthase from Candida albicans (strain SC5314 / ATCC MYA-2876) (Yeast).